The sequence spans 263 residues: MPYAVLGATGNCGTALIQNLLQSSTSKVHAYCRDRRKLLYLLPHLADNKQVDIFDGSIHDLPLITECVRNCHAVFLVISTNDNVPQCRMALDTATAVIQALRILHGEGASMPKLVLLSSATLDDQLSQNTAPWVRWILLKSASQVYQDLSQAEAFLRQQQDWISTIFIKPGGLSVDVQRGHRLSLTEEKSPLSYLDLAAAMIEAADDPDGRYDLRNVGVAYTDGPARFPRGAPMCIFMGLVRHFLPFLHPYLPATGPNQGFLC.

It belongs to the avfA family. As to expression, specifically expressed in conidia.

Its pathway is secondary metabolite biosynthesis. In terms of biological role, oxidoreductase; part of the gene cluster that mediates the biosynthesis of trypacidin, a mycotoxin with antiprotozoal activity and that plays a role in the infection process. The pathway begins with the synthesis of atrochrysone thioester by the polyketide synthase (PKS) tpcC. The atrochrysone carboxyl ACP thioesterase tpcB then breaks the thioester bond and releases the atrochrysone carboxylic acid from tpcC. The decarboxylase tpcK converts atrochrysone carboxylic acid to atrochrysone which is further reduced into emodin anthrone. The next step is performed by the emodin anthrone oxygenase tpcL that catalyzes the oxidation of emodinanthrone to emodin. Emodin O-methyltransferase encoded by tpcA catalyzes methylation of the 8-hydroxy group of emodin to form questin. Ring cleavage of questin by questin oxidase tpcI leads to desmethylsulochrin via several intermediates including questin epoxide. Another methylation step catalyzed by tpcM leads to the formation of sulochrin which is further converted to monomethylsulfochrin by tpcH. Finally, the tpcJ catalyzes the conversion of monomethylsulfochrin to trypacidin. Trypacidin is toxic for human pulmonary and bronchial epithelial cells by initiating the intracellular formation of nitric oxide (NO) and hydrogen peroxide (H(2)O(2)), thus triggering host necrotic cell death. The trypacidin pathway is also able to produce endocrocin via a distinct route from the endocrocin Enc pathway. The protein is Oxidoreductase tpcG of Aspergillus fumigatus (strain ATCC MYA-4609 / CBS 101355 / FGSC A1100 / Af293) (Neosartorya fumigata).